The sequence spans 77 residues: MLEGAKSMGAGAATNASAGAAIGIGNVLSSSIHSVARNPSLAKQLFGYAILGFALTEANASFAPMMAFLISFVFQVR.

The next 2 membrane-spanning stretches (helical) occupy residues 8–28 (MGAG…GNVL) and 45–72 (LFGY…LISF).

This sequence belongs to the ATPase C chain family. As to quaternary structure, F-type ATPases have 2 components, CF(1) - the catalytic core - and CF(0) - the membrane proton channel. CF(1) has five subunits: alpha(3), beta(3), gamma(1), delta(1), epsilon(1). CF(0) has three main subunits: a, b and c.

The protein localises to the mitochondrion membrane. In terms of biological role, this protein is one of the chains of the nonenzymatic membrane component (F0) of mitochondrial ATPase. The polypeptide is ATP synthase subunit 9, mitochondrial (ATP9) (Petunia sp. (Petunia)).